The following is a 330-amino-acid chain: Probable ADP,ATP carrier protein At5g56450 (330 aa).

Residues 1–10 show a composition bias toward acidic residues; that stretch reads MCISKEDEED. Positions 1-22 are disordered; the sequence is MCISKEDEEDPSRNRRNQSPLS. Transmembrane regions (helical) follow at residues 27–61, 103–127, 137–171, 203–230, 236–270, and 300–325; these read LKHF…LQTQ, GSSV…RSIL, IFSG…RLAA, GLPA…EIFS, ELAL…IMMQ, and GALS…KRFL. Solcar repeat units lie at residues 28 to 126, 139 to 228, and 241 to 324; these read KHFQ…YRSI, SGAL…VKEI, and KRWG…VKRF. Arg-108 and Lys-120 together coordinate ADP. Arg-264 provides a ligand contact to ADP. The Substrate recognition signature appears at 264–269; it reads RRRIMM.

The protein belongs to the mitochondrial carrier (TC 2.A.29) family. In terms of assembly, monomer.

Its subcellular location is the membrane. The enzyme catalyses ADP(in) + ATP(out) = ADP(out) + ATP(in). In terms of biological role, ADP:ATP antiporter that catalyzes the exchange of ADP and ATP across the membrane. The chain is Probable ADP,ATP carrier protein At5g56450 from Arabidopsis thaliana (Mouse-ear cress).